Here is a 431-residue protein sequence, read N- to C-terminus: NADH-quinone oxidoreductase subunit D 2 (431 aa).

A disordered region spans residues 1–37 (MSEAKGVGGIDPRATPGSAGAGERPPMGTLSPRAGEG).

Belongs to the complex I 49 kDa subunit family. In terms of assembly, NDH-1 is composed of 14 different subunits. Subunits NuoB, C, D, E, F, and G constitute the peripheral sector of the complex.

The protein resides in the cell inner membrane. It carries out the reaction a quinone + NADH + 5 H(+)(in) = a quinol + NAD(+) + 4 H(+)(out). In terms of biological role, NDH-1 shuttles electrons from NADH, via FMN and iron-sulfur (Fe-S) centers, to quinones in the respiratory chain. The immediate electron acceptor for the enzyme in this species is believed to be ubiquinone. Couples the redox reaction to proton translocation (for every two electrons transferred, four hydrogen ions are translocated across the cytoplasmic membrane), and thus conserves the redox energy in a proton gradient. The chain is NADH-quinone oxidoreductase subunit D 2 from Anaeromyxobacter sp. (strain K).